The chain runs to 67 residues: Protein AaeX (67 aa).

2 consecutive transmembrane segments (helical) span residues 3–23 (LFPV…ELLL) and 47–67 (PALF…RLFV).

This sequence belongs to the AaeX family.

It is found in the cell membrane. In Escherichia coli O157:H7, this protein is Protein AaeX.